Consider the following 845-residue polypeptide: Beta-glucosidase (845 aa).

An N-linked (GlcNAc...) asparagine glycan is attached at Asn66. The active site involves Asp225. Residues Asn304, Asn438, and Asn621 are each glycosylated (N-linked (GlcNAc...) asparagine). A PA14 domain is found at 408–568 (AENAGLIAKF…DDDEEIRNAA (161 aa)).

It belongs to the glycosyl hydrolase 3 family. As to quaternary structure, homotetramer.

It catalyses the reaction Hydrolysis of terminal, non-reducing beta-D-glucosyl residues with release of beta-D-glucose.. It participates in glycan metabolism; cellulose degradation. In Kluyveromyces marxianus (Yeast), this protein is Beta-glucosidase.